The following is a 125-amino-acid chain: Large ribosomal subunit protein bL17 (125 aa).

It belongs to the bacterial ribosomal protein bL17 family. As to quaternary structure, part of the 50S ribosomal subunit. Contacts protein L32.

This is Large ribosomal subunit protein bL17 from Acinetobacter baumannii (strain AB307-0294).